The chain runs to 122 residues: Large ribosomal subunit protein uL14 (122 aa).

Belongs to the universal ribosomal protein uL14 family. Part of the 50S ribosomal subunit. Forms a cluster with proteins L3 and L19. In the 70S ribosome, L14 and L19 interact and together make contacts with the 16S rRNA in bridges B5 and B8.

Functionally, binds to 23S rRNA. Forms part of two intersubunit bridges in the 70S ribosome. In Novosphingobium aromaticivorans (strain ATCC 700278 / DSM 12444 / CCUG 56034 / CIP 105152 / NBRC 16084 / F199), this protein is Large ribosomal subunit protein uL14.